Consider the following 175-residue polypeptide: Archaemetzincin (175 aa).

H125 lines the Zn(2+) pocket. Catalysis depends on E126, which acts as the Proton acceptor. The Zn(2+) site is built by H129, H135, C136, C141, C160, and C163.

The protein belongs to the peptidase M54 family. In terms of assembly, monomer. Zn(2+) is required as a cofactor.

In terms of biological role, probable zinc metalloprotease whose natural substrate is unknown. Does not show endo- or exopeptidase activity against resorufin labeled casein, p-nitroanilide (pNA), amidomethylcoumarin (AMC) (one to three amino acids in length), and hippuryl-aminoacid substrates. The polypeptide is Archaemetzincin (Methanopyrus kandleri (strain AV19 / DSM 6324 / JCM 9639 / NBRC 100938)).